The sequence spans 270 residues: MSESLEKPVVKIALGIEYDGSKYYGWQRQQEVRSVQEKLEKALSQVANEPINVFCAGRTDAGVHATGQVVHFETTAIRKDAAWTLGVNANLPGDIAVRWVKDVPAEFHARFSATARRYRYVIYNHRLRPAVLSQGVTHYHLPLDAERMHRAAQCLIGENDFTSFRAVQCQSRTPWRNLMHINVERFGAYIVVDIKANAFVHHMVRNIVGSLMEIGCGNQPESWMAELLAAKDRTLAAATAKAEGLYLVSVDYPAQFELPKPPMGPLFLAD.

Residue D60 is the Nucleophile of the active site. Y118 serves as a coordination point for substrate.

The protein belongs to the tRNA pseudouridine synthase TruA family. As to quaternary structure, homodimer.

The enzyme catalyses uridine(38/39/40) in tRNA = pseudouridine(38/39/40) in tRNA. Formation of pseudouridine at positions 38, 39 and 40 in the anticodon stem and loop of transfer RNAs. The sequence is that of tRNA pseudouridine synthase A from Cronobacter sakazakii (strain ATCC BAA-894) (Enterobacter sakazakii).